The sequence spans 141 residues: Large ribosomal subunit protein uL13 (141 aa).

Belongs to the universal ribosomal protein uL13 family. As to quaternary structure, part of the 50S ribosomal subunit.

This protein is one of the early assembly proteins of the 50S ribosomal subunit, although it is not seen to bind rRNA by itself. It is important during the early stages of 50S assembly. The protein is Large ribosomal subunit protein uL13 of Helicobacter acinonychis (strain Sheeba).